Here is a 161-residue protein sequence, read N- to C-terminus: Nucleotide-binding protein Shal_3198 (161 aa).

The protein belongs to the YajQ family.

Functionally, nucleotide-binding protein. This Shewanella halifaxensis (strain HAW-EB4) protein is Nucleotide-binding protein Shal_3198.